The chain runs to 95 residues: MNNKLTALIFLGLLAIASCKWLNEKSIQNKIDEKIGKNFLGGMAKAVVHKLAKNEFMCVANIDMTKSCDTHCQKASGEKGYCHGTKCKCGVPLSY.

Residues 1–19 form the signal peptide; it reads MNNKLTALIFLGLLAIASC. Residues 55–95 form the BetaSPN-type CS-alpha/beta domain; the sequence is EFMCVANIDMTKSCDTHCQKASGEKGYCHGTKCKCGVPLSY. 3 disulfides stabilise this stretch: Cys-58–Cys-82, Cys-68–Cys-87, and Cys-72–Cys-89.

Belongs to the long chain scorpion toxin family. Class 3 subfamily. As to expression, expressed by the venom gland.

It is found in the secreted. Functionally, has antimicrobial activity against yeasts and bacteria. The protein is Opiscorpine-4 of Opistophthalmus carinatus (African yellow leg scorpion).